The chain runs to 154 residues: Neurotrophin-3 (154 aa).

Residues 1-18 (MSILFYVMFLAYLRGVQG) form the signal peptide. The propeptide occupies 19 to 134 (NSMDQRSLPE…VNSRSPRRKR (116 aa)).

Belongs to the NGF-beta family.

It localises to the secreted. Functionally, seems to promote the survival of visceral and proprioceptive sensory neurons. The protein is Neurotrophin-3 (NTF3) of Cervus elaphus (Red deer).